The following is a 253-amino-acid chain: Probable U3 small nucleolar RNA-associated protein 11 (253 aa).

The segment at 1 to 26 (MAAAFRKAAKSRQREHRERSQPGFRK) is disordered. Glycyl lysine isopeptide (Lys-Gly) (interchain with G-Cter in SUMO2) cross-links involve residues K74, K83, and K86. T90 is modified (phosphothreonine). Glycyl lysine isopeptide (Lys-Gly) (interchain with G-Cter in SUMO2) cross-links involve residues K103, K120, K143, K144, K180, K211, K218, K235, and K236. At S241 the chain carries Phosphoserine. K246 participates in a covalent cross-link: Glycyl lysine isopeptide (Lys-Gly) (interchain with G-Cter in SUMO2).

This sequence belongs to the UTP11 family. In terms of assembly, part of the small subunit (SSU) processome, composed of more than 70 proteins and the RNA chaperone small nucleolar RNA (snoRNA) U3.

Its subcellular location is the nucleus. The protein resides in the nucleolus. Its function is as follows. Part of the small subunit (SSU) processome, first precursor of the small eukaryotic ribosomal subunit. During the assembly of the SSU processome in the nucleolus, many ribosome biogenesis factors, an RNA chaperone and ribosomal proteins associate with the nascent pre-rRNA and work in concert to generate RNA folding, modifications, rearrangements and cleavage as well as targeted degradation of pre-ribosomal RNA by the RNA exosome. Involved in nucleolar processing of pre-18S ribosomal RNA. This Homo sapiens (Human) protein is Probable U3 small nucleolar RNA-associated protein 11.